The primary structure comprises 147 residues: UPF0306 protein YhbP (147 aa).

The protein belongs to the UPF0306 family.

The polypeptide is UPF0306 protein YhbP (Salmonella choleraesuis (strain SC-B67)).